The sequence spans 379 residues: 3-dehydroquinate synthase (379 aa).

Residues 67 to 72, 101 to 105, 125 to 126, Lys138, and Lys147 each bind NAD(+); these read SGEKNK, GVVLD, and TT. The Zn(2+) site is built by Glu180, His242, and His258.

Belongs to the sugar phosphate cyclases superfamily. Dehydroquinate synthase family. NAD(+) is required as a cofactor. It depends on Co(2+) as a cofactor. Requires Zn(2+) as cofactor.

It localises to the cytoplasm. It catalyses the reaction 7-phospho-2-dehydro-3-deoxy-D-arabino-heptonate = 3-dehydroquinate + phosphate. It participates in metabolic intermediate biosynthesis; chorismate biosynthesis; chorismate from D-erythrose 4-phosphate and phosphoenolpyruvate: step 2/7. Functionally, catalyzes the conversion of 3-deoxy-D-arabino-heptulosonate 7-phosphate (DAHP) to dehydroquinate (DHQ). This is 3-dehydroquinate synthase from Chlamydia abortus (strain DSM 27085 / S26/3) (Chlamydophila abortus).